Consider the following 239-residue polypeptide: Transcriptional regulatory protein RstA (239 aa).

A Response regulatory domain is found at 3–116 (TIVFVEDDAE…VLLARLRLHL (114 aa)). D52 bears the 4-aspartylphosphate mark. The segment at residues 136-235 (YKALHFGTLT…VRNKGYLFAP (100 aa)) is a DNA-binding region (ompR/PhoB-type).

Phosphorylated by RstB.

Its subcellular location is the cytoplasm. Functionally, member of the two-component regulatory system RstB/RstA. The protein is Transcriptional regulatory protein RstA (rstA) of Escherichia coli (strain K12).